A 158-amino-acid polypeptide reads, in one-letter code: Cyclic pyranopterin monophosphate synthase (158 aa).

Substrate contacts are provided by residues 75–77 and 113–114; these read LCH and ME. The active site involves aspartate 128.

It belongs to the MoaC family. Homohexamer; trimer of dimers.

The catalysed reaction is (8S)-3',8-cyclo-7,8-dihydroguanosine 5'-triphosphate = cyclic pyranopterin phosphate + diphosphate. Its pathway is cofactor biosynthesis; molybdopterin biosynthesis. Its function is as follows. Catalyzes the conversion of (8S)-3',8-cyclo-7,8-dihydroguanosine 5'-triphosphate to cyclic pyranopterin monophosphate (cPMP). In Mannheimia succiniciproducens (strain KCTC 0769BP / MBEL55E), this protein is Cyclic pyranopterin monophosphate synthase.